Reading from the N-terminus, the 100-residue chain is Aspartyl/glutamyl-tRNA(Asn/Gln) amidotransferase subunit C (100 aa).

It belongs to the GatC family. Heterotrimer of A, B and C subunits.

The enzyme catalyses L-glutamyl-tRNA(Gln) + L-glutamine + ATP + H2O = L-glutaminyl-tRNA(Gln) + L-glutamate + ADP + phosphate + H(+). The catalysed reaction is L-aspartyl-tRNA(Asn) + L-glutamine + ATP + H2O = L-asparaginyl-tRNA(Asn) + L-glutamate + ADP + phosphate + 2 H(+). In terms of biological role, allows the formation of correctly charged Asn-tRNA(Asn) or Gln-tRNA(Gln) through the transamidation of misacylated Asp-tRNA(Asn) or Glu-tRNA(Gln) in organisms which lack either or both of asparaginyl-tRNA or glutaminyl-tRNA synthetases. The reaction takes place in the presence of glutamine and ATP through an activated phospho-Asp-tRNA(Asn) or phospho-Glu-tRNA(Gln). This Streptococcus suis (strain 98HAH33) protein is Aspartyl/glutamyl-tRNA(Asn/Gln) amidotransferase subunit C.